The chain runs to 448 residues: tRNA-2-methylthio-N(6)-dimethylallyladenosine synthase (448 aa).

The region spanning 3-120 is the MTTase N-terminal domain; the sequence is KKLFIKTHGC…LPTMLDSRQG (118 aa). The [4Fe-4S] cluster site is built by Cys-12, Cys-49, Cys-83, Cys-158, Cys-162, and Cys-165. Residues 144 to 376 form the Radical SAM core domain; the sequence is TSDGATAFVS…QERLNQQTMQ (233 aa). The TRAM domain occupies 379–444; sequence RRMVGNTERI…PNSLRGDLAS (66 aa).

This sequence belongs to the methylthiotransferase family. MiaB subfamily. As to quaternary structure, monomer. The cofactor is [4Fe-4S] cluster.

The protein localises to the cytoplasm. The enzyme catalyses N(6)-dimethylallyladenosine(37) in tRNA + (sulfur carrier)-SH + AH2 + 2 S-adenosyl-L-methionine = 2-methylsulfanyl-N(6)-dimethylallyladenosine(37) in tRNA + (sulfur carrier)-H + 5'-deoxyadenosine + L-methionine + A + S-adenosyl-L-homocysteine + 2 H(+). Catalyzes the methylthiolation of N6-(dimethylallyl)adenosine (i(6)A), leading to the formation of 2-methylthio-N6-(dimethylallyl)adenosine (ms(2)i(6)A) at position 37 in tRNAs that read codons beginning with uridine. This is tRNA-2-methylthio-N(6)-dimethylallyladenosine synthase from Chromohalobacter salexigens (strain ATCC BAA-138 / DSM 3043 / CIP 106854 / NCIMB 13768 / 1H11).